Reading from the N-terminus, the 457-residue chain is Chromosomal replication initiator protein DnaA (457 aa).

The segment at 1 to 81 (MERDLSQLWQ…NNTDLVIKVQ (81 aa)) is domain I, interacts with DnaA modulators. Residues 81–119 (QEGSKPAARKVVAQQEIANTPVQHSAPMPENEPQAAFRS) form a domain II region. Residues 120–337 (NLNQHHLFEN…GALNRVHANA (218 aa)) are domain III, AAA+ region. ATP is bound by residues G165, G167, K168, and T169. The segment at 338 to 457 (DFTGKAITID…WSNLIRTLSA (120 aa)) is domain IV, binds dsDNA.

It belongs to the DnaA family. Oligomerizes as a right-handed, spiral filament on DNA at oriC.

It is found in the cytoplasm. In terms of biological role, plays an essential role in the initiation and regulation of chromosomal replication. ATP-DnaA binds to the origin of replication (oriC) to initiate formation of the DNA replication initiation complex once per cell cycle. Binds the DnaA box (a 9 base pair repeat at the origin) and separates the double-stranded (ds)DNA. Forms a right-handed helical filament on oriC DNA; dsDNA binds to the exterior of the filament while single-stranded (ss)DNA is stabiized in the filament's interior. The ATP-DnaA-oriC complex binds and stabilizes one strand of the AT-rich DNA unwinding element (DUE), permitting loading of DNA polymerase. After initiation quickly degrades to an ADP-DnaA complex that is not apt for DNA replication. Binds acidic phospholipids. The chain is Chromosomal replication initiator protein DnaA from Mannheimia succiniciproducens (strain KCTC 0769BP / MBEL55E).